The following is a 506-amino-acid chain: ATP synthase subunit alpha (506 aa).

170–177 (GDRQTGKT) lines the ATP pocket.

It belongs to the ATPase alpha/beta chains family. F-type ATPases have 2 components, CF(1) - the catalytic core - and CF(0) - the membrane proton channel. CF(1) has five subunits: alpha(3), beta(3), gamma(1), delta(1), epsilon(1). CF(0) has four main subunits: a(1), b(1), b'(1) and c(9-12).

The protein resides in the cellular thylakoid membrane. It catalyses the reaction ATP + H2O + 4 H(+)(in) = ADP + phosphate + 5 H(+)(out). Functionally, produces ATP from ADP in the presence of a proton gradient across the membrane. The alpha chain is a regulatory subunit. The protein is ATP synthase subunit alpha of Synechococcus sp. (strain CC9605).